A 494-amino-acid polypeptide reads, in one-letter code: UPF0371 protein SEQ_1471 (494 aa).

This sequence belongs to the UPF0371 family.

The sequence is that of UPF0371 protein SEQ_1471 from Streptococcus equi subsp. equi (strain 4047).